A 322-amino-acid chain; its full sequence is Replication factor C small subunit 2 (322 aa).

44–51 (GPPGTGKT) is a binding site for ATP.

This sequence belongs to the activator 1 small subunits family. RfcS subfamily. In terms of assembly, heteromultimer composed of small subunits (RfcS) and large subunits (RfcL).

Functionally, part of the RFC clamp loader complex which loads the PCNA sliding clamp onto DNA. In Pyrobaculum arsenaticum (strain DSM 13514 / JCM 11321 / PZ6), this protein is Replication factor C small subunit 2.